We begin with the raw amino-acid sequence, 156 residues long: SsrA-binding protein (156 aa).

Belongs to the SmpB family.

It localises to the cytoplasm. Its function is as follows. Required for rescue of stalled ribosomes mediated by trans-translation. Binds to transfer-messenger RNA (tmRNA), required for stable association of tmRNA with ribosomes. tmRNA and SmpB together mimic tRNA shape, replacing the anticodon stem-loop with SmpB. tmRNA is encoded by the ssrA gene; the 2 termini fold to resemble tRNA(Ala) and it encodes a 'tag peptide', a short internal open reading frame. During trans-translation Ala-aminoacylated tmRNA acts like a tRNA, entering the A-site of stalled ribosomes, displacing the stalled mRNA. The ribosome then switches to translate the ORF on the tmRNA; the nascent peptide is terminated with the 'tag peptide' encoded by the tmRNA and targeted for degradation. The ribosome is freed to recommence translation, which seems to be the essential function of trans-translation. This is SsrA-binding protein from Trichodesmium erythraeum (strain IMS101).